Here is a 464-residue protein sequence, read N- to C-terminus: ATP synthase subunit beta (464 aa).

ATP is bound at residue 153-160; the sequence is GGAGVGKT.

The protein belongs to the ATPase alpha/beta chains family. In terms of assembly, F-type ATPases have 2 components, CF(1) - the catalytic core - and CF(0) - the membrane proton channel. CF(1) has five subunits: alpha(3), beta(3), gamma(1), delta(1), epsilon(1). CF(0) has three main subunits: a(1), b(2) and c(9-12). The alpha and beta chains form an alternating ring which encloses part of the gamma chain. CF(1) is attached to CF(0) by a central stalk formed by the gamma and epsilon chains, while a peripheral stalk is formed by the delta and b chains.

It localises to the cell membrane. The enzyme catalyses ATP + H2O + 4 H(+)(in) = ADP + phosphate + 5 H(+)(out). Its function is as follows. Produces ATP from ADP in the presence of a proton gradient across the membrane. The catalytic sites are hosted primarily by the beta subunits. The sequence is that of ATP synthase subunit beta from Alkaliphilus oremlandii (strain OhILAs) (Clostridium oremlandii (strain OhILAs)).